A 302-amino-acid chain; its full sequence is Uricase (302 aa).

Residues lysine 22 and threonine 67 each act as charge relay system in the active site. Urate is bound by residues threonine 67, aspartate 68, phenylalanine 163, arginine 180, glutamine 223, and asparagine 249. The active-site Charge relay system is the histidine 251.

Belongs to the uricase family. Homotetramer.

The catalysed reaction is urate + O2 + H2O = 5-hydroxyisourate + H2O2. It functions in the pathway purine metabolism; urate degradation; (S)-allantoin from urate: step 1/3. Catalyzes the oxidation of uric acid to 5-hydroxyisourate, which is further processed to form (S)-allantoin. The sequence is that of Uricase (uox) from Arthrobacter globiformis.